Here is a 249-residue protein sequence, read N- to C-terminus: Seipin homolog (249 aa).

Residues 1 to 10 lie on the Cytoplasmic side of the membrane; the sequence is MGYLVKLFKL. The chain crosses the membrane as a helical span at residues 11-31; the sequence is VVWMLVIGLFSIPSLVSYVIF. The Lumenal portion of the chain corresponds to 32 to 212; sequence YDTVIPHSVI…GMRWFMYTHK (181 aa). The helical transmembrane segment at 213 to 233 threads the bilayer; that stretch reads VSAFLVFTSLFWFTGITSTII. Topologically, residues 234-249 are cytoplasmic; that stretch reads TYLIVSSTSETKATRR.

It belongs to the seipin family.

It localises to the endoplasmic reticulum membrane. Its function is as follows. Involved in lipid metabolism and lipid droplet (LD) morphology, number, and size. Facilitates initiation of LD formation, and ensures that vectorial budding of LDs from the ER is directed towards the cytoplasm. This chain is Seipin homolog, found in Schizosaccharomyces pombe (strain 972 / ATCC 24843) (Fission yeast).